The following is a 348-amino-acid chain: MTTTTSTLPLPTPWRDKLNGILFVALMAAAVVQLADLPFIRQFGFSPLVVGIVCGMLYGNFLRGTMPADWGAGVHFTARRLLRIAVAFYGLNISIQQIAAVGLPGLAVSVGVVASTLLIGTVAGQRLLGLDRDTAMLTAAGSAICGAAAVLAFEPTLRAAPHKSAVAVATVVLFGTLSMFLYPVIYHAGWLPFDTQALGIYIGGTVHEVAQVVGAASNIDPATTEVATIVKMTRVALLVPVLLVLGFWLRASAAAGADGKSHAKLPVPWFAIGFLVLAIVNSLDILPSDLVTAIRKLDVFVLTMAMTALGIETRFAQIRKAGPRVMALGLVLYAWLVFGGYGIVKLAT.

A run of 10 helical transmembrane segments spans residues 20–39 (GILF…DLPF), 43–62 (FGFS…GNFL), 98–120 (IAAV…LLIG), 135–157 (AMLT…EPTL), 164–186 (SAVA…PVIY), 196–215 (QALG…VVGA), 235–257 (VALL…AAGA), 267–286 (VPWF…LDIL), 299–318 (VFVL…FAQI), and 322–344 (GPRV…YGIV).

This sequence belongs to the UPF0324 family.

Its subcellular location is the cell membrane. The polypeptide is UPF0324 membrane protein BPP3732 (Bordetella parapertussis (strain 12822 / ATCC BAA-587 / NCTC 13253)).